The sequence spans 164 residues: Phosphopantetheine adenylyltransferase (164 aa).

Serine 9 lines the substrate pocket. Residues 9–10 and histidine 17 contribute to the ATP site; that span reads SF. Substrate-binding residues include lysine 41, valine 78, and arginine 92. Residues 93–95, glutamate 103, and 128–134 contribute to the ATP site; these read GLR and SRPITAT.

This sequence belongs to the bacterial CoaD family. Homohexamer. The cofactor is Mg(2+).

The protein localises to the cytoplasm. It carries out the reaction (R)-4'-phosphopantetheine + ATP + H(+) = 3'-dephospho-CoA + diphosphate. It participates in cofactor biosynthesis; coenzyme A biosynthesis; CoA from (R)-pantothenate: step 4/5. Functionally, reversibly transfers an adenylyl group from ATP to 4'-phosphopantetheine, yielding dephospho-CoA (dPCoA) and pyrophosphate. This is Phosphopantetheine adenylyltransferase from Rhizobium etli (strain ATCC 51251 / DSM 11541 / JCM 21823 / NBRC 15573 / CFN 42).